Reading from the N-terminus, the 197-residue chain is Nucleoid occlusion factor SlmA (197 aa).

The 61-residue stretch at 7 to 67 folds into the HTH tetR-type domain; sequence INRREHILQC…GLIEFIEESL (61 aa). Positions 30-49 form a DNA-binding region, H-T-H motif; sequence TTAKLASEVGVSEAALYRHF.

This sequence belongs to the nucleoid occlusion factor SlmA family. In terms of assembly, homodimer. Interacts with FtsZ.

The protein resides in the cytoplasm. It is found in the nucleoid. Its function is as follows. Required for nucleoid occlusion (NO) phenomenon, which prevents Z-ring formation and cell division over the nucleoid. Acts as a DNA-associated cell division inhibitor that binds simultaneously chromosomal DNA and FtsZ, and disrupts the assembly of FtsZ polymers. SlmA-DNA-binding sequences (SBS) are dispersed on non-Ter regions of the chromosome, preventing FtsZ polymerization at these regions. The protein is Nucleoid occlusion factor SlmA of Shewanella oneidensis (strain ATCC 700550 / JCM 31522 / CIP 106686 / LMG 19005 / NCIMB 14063 / MR-1).